We begin with the raw amino-acid sequence, 92 residues long: Long neurotoxin 1 (92 aa).

The first 21 residues, 1–21, serve as a signal peptide directing secretion; it reads MKILLLTLVVVTIVCLDLAYT. 5 disulfide bridges follow: cysteine 24–cysteine 41, cysteine 34–cysteine 62, cysteine 47–cysteine 51, cysteine 66–cysteine 77, and cysteine 78–cysteine 83.

It belongs to the three-finger toxin family. Long-chain subfamily. Type II alpha-neurotoxin sub-subfamily. As to expression, expressed by the venom gland.

It localises to the secreted. Binds with high affinity to muscular (alpha-1/CHRNA1) and neuronal (alpha-7/CHRNA7) nicotinic acetylcholine receptor (nAChR) and inhibits acetylcholine from binding to the receptor, thereby impairing neuromuscular and neuronal transmission. This Hydrophis hardwickii (Hardwick's spine-bellied seasnake) protein is Long neurotoxin 1.